Consider the following 424-residue polypeptide: Tyrosine--tRNA ligase (424 aa).

L-tyrosine is bound at residue Y37. The short motif at 42–51 (PTADSLHLGH) is the 'HIGH' region element. Residues Y175 and Q179 each coordinate L-tyrosine. The 'KMSKS' region signature appears at 235–239 (KFGKT). Residue K238 participates in ATP binding. The S4 RNA-binding domain occupies 357–414 (ADLMQALVDAELQPSRGQARKTIASNAVTINGEKQSDPEYIFNDEDRLFGRYTLLRRG).

Belongs to the class-I aminoacyl-tRNA synthetase family. TyrS type 1 subfamily. In terms of assembly, homodimer.

It localises to the cytoplasm. The catalysed reaction is tRNA(Tyr) + L-tyrosine + ATP = L-tyrosyl-tRNA(Tyr) + AMP + diphosphate + H(+). Catalyzes the attachment of tyrosine to tRNA(Tyr) in a two-step reaction: tyrosine is first activated by ATP to form Tyr-AMP and then transferred to the acceptor end of tRNA(Tyr). This Salmonella enteritidis PT4 (strain P125109) protein is Tyrosine--tRNA ligase.